An 883-amino-acid chain; its full sequence is Alanine--tRNA ligase (883 aa).

Zn(2+) is bound by residues H564, H568, C666, and H670.

It belongs to the class-II aminoacyl-tRNA synthetase family. Zn(2+) serves as cofactor.

Its subcellular location is the cytoplasm. It carries out the reaction tRNA(Ala) + L-alanine + ATP = L-alanyl-tRNA(Ala) + AMP + diphosphate. Functionally, catalyzes the attachment of alanine to tRNA(Ala) in a two-step reaction: alanine is first activated by ATP to form Ala-AMP and then transferred to the acceptor end of tRNA(Ala). Also edits incorrectly charged Ser-tRNA(Ala) and Gly-tRNA(Ala) via its editing domain. This Synechococcus sp. (strain JA-3-3Ab) (Cyanobacteria bacterium Yellowstone A-Prime) protein is Alanine--tRNA ligase.